Consider the following 302-residue polypeptide: Haloalkane dehalogenase (302 aa).

The region spanning 48 to 150 is the AB hydrolase-1 domain; the sequence is PVLLMHGEPS…AGLVIANTGL (103 aa). D123 serves as the catalytic Nucleophile. The active-site Proton donor is the D249. Residue H278 is the Proton acceptor of the active site.

The protein belongs to the haloalkane dehalogenase family. Type 1 subfamily. In terms of assembly, monomer.

The enzyme catalyses 1-haloalkane + H2O = a halide anion + a primary alcohol + H(+). Functionally, catalyzes hydrolytic cleavage of carbon-halogen bonds in halogenated aliphatic compounds, leading to the formation of the corresponding primary alcohols, halide ions and protons. The sequence is that of Haloalkane dehalogenase from Caulobacter sp. (strain K31).